We begin with the raw amino-acid sequence, 827 residues long: Valine--tRNA ligase (827 aa).

The 'HIGH' region motif lies at 41–51 (PNVTGQLHLGH). The 'KMSKS' region signature appears at 511-515 (KMTKS). Lys514 contributes to the ATP binding site. Residues 765–827 (ENLSKEKAQK…KELLDEKIIE (63 aa)) are a coiled coil.

It belongs to the class-I aminoacyl-tRNA synthetase family. ValS type 1 subfamily. In terms of assembly, monomer.

Its subcellular location is the cytoplasm. The catalysed reaction is tRNA(Val) + L-valine + ATP = L-valyl-tRNA(Val) + AMP + diphosphate. Functionally, catalyzes the attachment of valine to tRNA(Val). As ValRS can inadvertently accommodate and process structurally similar amino acids such as threonine, to avoid such errors, it has a 'posttransfer' editing activity that hydrolyzes mischarged Thr-tRNA(Val) in a tRNA-dependent manner. This chain is Valine--tRNA ligase, found in Mycoplasmopsis pulmonis (strain UAB CTIP) (Mycoplasma pulmonis).